We begin with the raw amino-acid sequence, 61 residues long: Large ribosomal subunit protein uL30 (61 aa).

The protein belongs to the universal ribosomal protein uL30 family. Part of the 50S ribosomal subunit.

The protein is Large ribosomal subunit protein uL30 of Neisseria meningitidis serogroup C (strain 053442).